The following is a 332-amino-acid chain: 2,3-diketo-L-gulonate reductase (332 aa).

His44 (proton donor) is an active-site residue. Residues 168–174, 224–225, and 304–306 each bind NAD(+); these read ITMIDMS, WK, and GHE.

It belongs to the LDH2/MDH2 oxidoreductase family. DlgD subfamily. Homodimer.

Its subcellular location is the cytoplasm. It carries out the reaction 3-dehydro-L-gulonate + NAD(+) = 2,3-dioxo-L-gulonate + NADH + H(+). The enzyme catalyses 3-dehydro-L-gulonate + NADP(+) = 2,3-dioxo-L-gulonate + NADPH + H(+). In terms of biological role, catalyzes the reduction of 2,3-diketo-L-gulonate in the presence of NADH, to form 3-keto-L-gulonate. This chain is 2,3-diketo-L-gulonate reductase, found in Citrobacter koseri (strain ATCC BAA-895 / CDC 4225-83 / SGSC4696).